The chain runs to 424 residues: Probable ribonuclease FAU-1 (424 aa).

It belongs to the FAU-1 family.

In terms of biological role, probable RNase involved in rRNA stability through maturation and/or degradation of precursor rRNAs. Binds to RNA in loop regions with AU-rich sequences. The sequence is that of Probable ribonuclease FAU-1 from Saccharolobus solfataricus (strain ATCC 35092 / DSM 1617 / JCM 11322 / P2) (Sulfolobus solfataricus).